The sequence spans 246 residues: Probable transcriptional regulatory protein COSY_0365 (246 aa).

The protein belongs to the TACO1 family.

It is found in the cytoplasm. The sequence is that of Probable transcriptional regulatory protein COSY_0365 from Vesicomyosocius okutanii subsp. Calyptogena okutanii (strain HA).